The following is a 103-amino-acid chain: Integration host factor subunit beta (103 aa).

The protein belongs to the bacterial histone-like protein family. In terms of assembly, heterodimer of an alpha and a beta chain.

This protein is one of the two subunits of integration host factor, a specific DNA-binding protein that functions in genetic recombination as well as in transcriptional and translational control. The chain is Integration host factor subunit beta from Rhizobium meliloti (strain 1021) (Ensifer meliloti).